Consider the following 377-residue polypeptide: MQQRVIVGMSGGVDSSVSAALLLQQGYQVEGLFMKNWEEDDGTEYCTAMEDLADAQAVADKIGIKLHTANFAMEYWDRVFEHFLAEYAAGRTPNPDILCNKEIKFRAFLDHAMTLGADFIATGHYARRAETAYNSKGEAYAPLLRGLDNNKDQTYFLHAVHGREINKTLFPVGEIEKPEVRRIAEELDLATAKKKDSTGICFIGERRFNDFLKQYLPAQPGKIVLDNGKEVGEHHGLMYYTLGQRGGIGLGGMKGASEGAWFVLHKDVTNNRLVVGQGHDHPLMQSTQLWSESIDWVAGEQNIPAEGLRCTAKTRYRQPDQACTVFIDENSEHGVRVEFDEPQRAVTPGQSVVFYSDEVCLGGGVIHHTNAPTPNFI.

ATP contacts are provided by residues Gly-8–Ser-15 and Met-34. The tract at residues Asn-94 to Asp-96 is interaction with target base in tRNA. The active-site Nucleophile is Cys-99. An intrachain disulfide couples Cys-99 to Cys-201. Gly-123 provides a ligand contact to ATP. Residues Lys-151–Gln-153 form an interaction with tRNA region. The active-site Cysteine persulfide intermediate is Cys-201. An interaction with tRNA region spans residues Arg-315–Tyr-316.

The protein belongs to the MnmA/TRMU family.

The protein localises to the cytoplasm. It carries out the reaction S-sulfanyl-L-cysteinyl-[protein] + uridine(34) in tRNA + AH2 + ATP = 2-thiouridine(34) in tRNA + L-cysteinyl-[protein] + A + AMP + diphosphate + H(+). Catalyzes the 2-thiolation of uridine at the wobble position (U34) of tRNA, leading to the formation of s(2)U34. The sequence is that of tRNA-specific 2-thiouridylase MnmA from Acinetobacter baumannii (strain SDF).